The sequence spans 549 residues: Probable protein kinase UbiB (549 aa).

A Protein kinase domain is found at 123–501 (DFNDTPLASA…QQKSHKSNYL (379 aa)). Residues 129–137 (LASASISQV) and lysine 152 contribute to the ATP site. Aspartate 287 acts as the Proton acceptor in catalysis. Transmembrane regions (helical) follow at residues 498–518 (SNYLLITSAVLLICGTILFTQ) and 519–539 (IVTLWPAYTCIGAGILIWAIG).

Belongs to the ABC1 family. UbiB subfamily.

The protein resides in the cell inner membrane. The protein operates within cofactor biosynthesis; ubiquinone biosynthesis [regulation]. In terms of biological role, is probably a protein kinase regulator of UbiI activity which is involved in aerobic coenzyme Q (ubiquinone) biosynthesis. The protein is Probable protein kinase UbiB of Shewanella frigidimarina (strain NCIMB 400).